Here is a 778-residue protein sequence, read N- to C-terminus: IQ domain-containing protein E (778 aa).

Disordered regions lie at residues 1–71 (MSLG…LSSR) and 83–108 (SSKQGSVAQPPSPTLTSEHAWTHPPS). The span at 37–49 (KPPSTSPKSPYYS) shows a compositional bias: low complexity. Residues 83-101 (SSKQGSVAQPPSPTLTSEH) are compositionally biased toward polar residues. The stretch at 157-323 (LHMQKSDVDL…DLDRMLSNSP (167 aa)) forms a coiled coil. S322 is modified (phosphoserine). Disordered regions lie at residues 348–392 (KKVS…EDLP), 443–462 (ETAREGEKGRQEQEQALREE), 474–529 (EEAK…SEER), and 573–612 (LVRSKVPDSRSPSLPGLLSPLNQSSPAPRVLSPISPAEEN). Positions 352–362 (SSESPKQSTSE) are enriched in low complexity. Positions 398-486 (EEQEHLQGTV…KREEKNSFVA (89 aa)) form a coiled coil. 2 consecutive IQ domains span residues 553-582 (LDEAATVLQAAFRGHLARSKLVRSKVPDSR) and 615-644 (QEEAVIVIQSILRGYLAQARFIASCCREIA). Positions 581–598 (SRSPSLPGLLSPLNQSSP) are enriched in low complexity. The span at 651–662 (TVSLTPSGSASP) shows a compositional bias: polar residues. Residues 651 to 778 (TVSLTPSGSA…LPRKKSPSPF (128 aa)) are disordered. At S661 the chain carries Phosphoserine. The span at 672 to 686 (IRKELCASEELRETS) shows a compositional bias: basic and acidic residues. Residues 739 to 752 (PSPPELQPLSPPPV) are compositionally biased toward pro residues.

As to quaternary structure, component of the EvC complex composed of EFCAB7, IQCE, EVC2 and EVC; built from two subcomplexes, EVC2:EVC and EFCAB7:IQCE. Interacts (via N-terminus) with EFCAB7 (via EF-hands 1 and 2); this interaction anchors the EVC-EVC2 complex in a signaling microdomain at the base of cilia and stimulates the Hedgehog (Hh) pathway. Interacts with EVC2 (via N-terminal end). Interacts with EVC.

Its subcellular location is the cell projection. It localises to the cilium membrane. Its function is as follows. Component of the EvC complex that positively regulates ciliary Hedgehog (Hh) signaling. Required for proper limb morphogenesis. This Mus musculus (Mouse) protein is IQ domain-containing protein E (Iqce).